Here is a 421-residue protein sequence, read N- to C-terminus: D-amino acid dehydrogenase (421 aa).

3–17 (ILILGSGVVGTASAY) is an FAD binding site.

Belongs to the DadA oxidoreductase family. FAD is required as a cofactor.

It catalyses the reaction a D-alpha-amino acid + A + H2O = a 2-oxocarboxylate + AH2 + NH4(+). Its pathway is amino-acid degradation; D-alanine degradation; NH(3) and pyruvate from D-alanine: step 1/1. Functionally, oxidative deamination of D-amino acids. This chain is D-amino acid dehydrogenase, found in Xanthobacter autotrophicus (strain ATCC BAA-1158 / Py2).